The primary structure comprises 156 residues: Cell division protein SepF (156 aa).

Residues 23–36 show a composition bias toward basic and acidic residues; sequence SYEKEQTDMKKQQD. Residues 23-49 form a disordered region; that stretch reads SYEKEQTDMKKQQDPPEQQDVTFPKAQ.

It belongs to the SepF family. Homodimer. Interacts with FtsZ.

It is found in the cytoplasm. Its function is as follows. Cell division protein that is part of the divisome complex and is recruited early to the Z-ring. Probably stimulates Z-ring formation, perhaps through the cross-linking of FtsZ protofilaments. Its function overlaps with FtsA. This chain is Cell division protein SepF, found in Bacillus anthracis (strain CDC 684 / NRRL 3495).